The chain runs to 461 residues: Ribulose bisphosphate carboxylase (461 aa).

Asn113 contributes to the substrate binding site. The Proton acceptor role is filled by Lys168. Lys170 lines the substrate pocket. Residues Lys193, Asp195, and Glu196 each coordinate Mg(2+). Lys193 carries the N6-carboxylysine modification. The active-site Proton acceptor is His289. Substrate contacts are provided by Arg290, His323, and Ser370.

This sequence belongs to the RuBisCO large chain family. Type II subfamily. In terms of assembly, homodimer. The cofactor is Mg(2+).

The enzyme catalyses 2 (2R)-3-phosphoglycerate + 2 H(+) = D-ribulose 1,5-bisphosphate + CO2 + H2O. It carries out the reaction D-ribulose 1,5-bisphosphate + O2 = 2-phosphoglycolate + (2R)-3-phosphoglycerate + 2 H(+). In terms of biological role, ruBisCO catalyzes two reactions: the carboxylation of D-ribulose 1,5-bisphosphate, the primary event in carbon dioxide fixation, as well as the oxidative fragmentation of the pentose substrate. Both reactions occur simultaneously and in competition at the same active site. In Thiomonas intermedia (strain K12) (Thiobacillus intermedius), this protein is Ribulose bisphosphate carboxylase.